We begin with the raw amino-acid sequence, 101 residues long: Small ribosomal subunit protein uS14 (101 aa).

The protein belongs to the universal ribosomal protein uS14 family. Part of the 30S ribosomal subunit. Contacts proteins S3 and S10.

Binds 16S rRNA, required for the assembly of 30S particles and may also be responsible for determining the conformation of the 16S rRNA at the A site. This is Small ribosomal subunit protein uS14 from Alcanivorax borkumensis (strain ATCC 700651 / DSM 11573 / NCIMB 13689 / SK2).